We begin with the raw amino-acid sequence, 553 residues long: Protein Early 65 kDa (553 aa).

It localises to the host cytoplasm. Its function is as follows. May participate in the recruitment of G-actin to the host nucleus. The protein is Protein Early 65 kDa (HE65) of Autographa californica nuclear polyhedrosis virus (AcMNPV).